A 485-amino-acid polypeptide reads, in one-letter code: Glutamyl-tRNA(Gln) amidotransferase subunit A (485 aa).

Residues lysine 78 and serine 153 each act as charge relay system in the active site. Serine 177 acts as the Acyl-ester intermediate in catalysis.

It belongs to the amidase family. GatA subfamily. As to quaternary structure, heterotrimer of A, B and C subunits.

It carries out the reaction L-glutamyl-tRNA(Gln) + L-glutamine + ATP + H2O = L-glutaminyl-tRNA(Gln) + L-glutamate + ADP + phosphate + H(+). In terms of biological role, allows the formation of correctly charged Gln-tRNA(Gln) through the transamidation of misacylated Glu-tRNA(Gln) in organisms which lack glutaminyl-tRNA synthetase. The reaction takes place in the presence of glutamine and ATP through an activated gamma-phospho-Glu-tRNA(Gln). This chain is Glutamyl-tRNA(Gln) amidotransferase subunit A, found in Bacillus cereus (strain AH820).